A 235-amino-acid polypeptide reads, in one-letter code: Phosphoribosylaminoimidazole-succinocarboxamide synthase (235 aa).

Belongs to the SAICAR synthetase family.

The catalysed reaction is 5-amino-1-(5-phospho-D-ribosyl)imidazole-4-carboxylate + L-aspartate + ATP = (2S)-2-[5-amino-1-(5-phospho-beta-D-ribosyl)imidazole-4-carboxamido]succinate + ADP + phosphate + 2 H(+). It functions in the pathway purine metabolism; IMP biosynthesis via de novo pathway; 5-amino-1-(5-phospho-D-ribosyl)imidazole-4-carboxamide from 5-amino-1-(5-phospho-D-ribosyl)imidazole-4-carboxylate: step 1/2. The sequence is that of Phosphoribosylaminoimidazole-succinocarboxamide synthase from Clostridium novyi (strain NT).